The sequence spans 321 residues: Phospho-N-acetylmuramoyl-pentapeptide-transferase (321 aa).

10 helical membrane-spanning segments follow: residues 6-26, 53-73, 77-97, 121-141, 144-164, 175-195, 200-220, 226-246, 251-271, and 301-321; these read MLIP…LFIG, TMGG…VGIW, LTLS…LGFY, ILGA…HTLW, IIGN…WLVG, LDGL…IIAA, TDVL…LMFN, IFMG…VAIL, WSLL…ILQV, and IDLT…AFFL.

Belongs to the glycosyltransferase 4 family. MraY subfamily. It depends on Mg(2+) as a cofactor.

It localises to the cell membrane. The catalysed reaction is UDP-N-acetyl-alpha-D-muramoyl-L-alanyl-gamma-D-glutamyl-L-lysyl-D-alanyl-D-alanine + di-trans,octa-cis-undecaprenyl phosphate = Mur2Ac(oyl-L-Ala-gamma-D-Glu-L-Lys-D-Ala-D-Ala)-di-trans,octa-cis-undecaprenyl diphosphate + UMP. It participates in cell wall biogenesis; peptidoglycan biosynthesis. In terms of biological role, catalyzes the initial step of the lipid cycle reactions in the biosynthesis of the cell wall peptidoglycan: transfers peptidoglycan precursor phospho-MurNAc-pentapeptide from UDP-MurNAc-pentapeptide onto the lipid carrier undecaprenyl phosphate, yielding undecaprenyl-pyrophosphoryl-MurNAc-pentapeptide, known as lipid I. This chain is Phospho-N-acetylmuramoyl-pentapeptide-transferase, found in Lacticaseibacillus paracasei (strain ATCC 334 / BCRC 17002 / CCUG 31169 / CIP 107868 / KCTC 3260 / NRRL B-441) (Lactobacillus paracasei).